Reading from the N-terminus, the 354-residue chain is NADH-quinone oxidoreductase subunit H (354 aa).

8 helical membrane passes run 25 to 45 (LVRI…LILW), 91 to 111 (WLYL…WAVI), 126 to 146 (LLYA…AGWA), 170 to 190 (MGFA…SEIV), 205 to 225 (FLSW…ISGI), 253 to 273 (MAFA…SALA), 290 to 310 (FIPG…VFIW), and 330 to 350 (VFLP…MSPL).

The protein belongs to the complex I subunit 1 family. In terms of assembly, NDH-1 is composed of 14 different subunits. Subunits NuoA, H, J, K, L, M, N constitute the membrane sector of the complex.

It is found in the cell inner membrane. The enzyme catalyses a quinone + NADH + 5 H(+)(in) = a quinol + NAD(+) + 4 H(+)(out). Functionally, NDH-1 shuttles electrons from NADH, via FMN and iron-sulfur (Fe-S) centers, to quinones in the respiratory chain. The immediate electron acceptor for the enzyme in this species is believed to be ubiquinone. Couples the redox reaction to proton translocation (for every two electrons transferred, four hydrogen ions are translocated across the cytoplasmic membrane), and thus conserves the redox energy in a proton gradient. This subunit may bind ubiquinone. The chain is NADH-quinone oxidoreductase subunit H from Burkholderia thailandensis (strain ATCC 700388 / DSM 13276 / CCUG 48851 / CIP 106301 / E264).